An 825-amino-acid polypeptide reads, in one-letter code: Glycerol-3-phosphate acyltransferase 1, mitochondrial (825 aa).

Residues Met1–Gly87 are Cytoplasmic-facing. The interval Asn80–Val120 is important for mitochondrial localization. The stretch at Leu88–Arg118 is an intramembrane region. Residues Asp119–Leu825 are Cytoplasmic-facing. The HXXXXD motif motif lies at His230–Asp235. Residues Arg278, Arg279, Lys288, Arg293, and Arg328 each contribute to the CoA site. At Ser380 the chain carries Phosphoserine. Positions Ser435–Ala455 are disordered. Arg461 lines the CoA pocket. 2 positions are modified to phosphoserine: Ser685 and Ser692. An N6-acetyllysine mark is found at Lys777 and Lys781.

Belongs to the GPAT/DAPAT family. Highly expressed in adipose tissues and lung. Low expression in liver.

The protein resides in the mitochondrion outer membrane. It catalyses the reaction sn-glycerol 3-phosphate + an acyl-CoA = a 1-acyl-sn-glycero-3-phosphate + CoA. The catalysed reaction is (9Z,12Z)-octadecadienoyl-CoA + sn-glycerol 3-phosphate = 1-(9Z,12Z)-octadecadienoyl-sn-glycero-3-phosphate + CoA. It carries out the reaction sn-glycerol 3-phosphate + (9Z)-octadecenoyl-CoA = 1-(9Z-octadecenoyl)-sn-glycero-3-phosphate + CoA. The enzyme catalyses sn-glycerol 3-phosphate + octadecanoyl-CoA = 1-octadecanoyl-sn-glycero-3-phosphate + CoA. It catalyses the reaction sn-glycerol 3-phosphate + hexadecanoyl-CoA = 1-hexadecanoyl-sn-glycero-3-phosphate + CoA. The catalysed reaction is dodecanoyl-CoA + sn-glycerol 3-phosphate = 1-dodecanoyl-sn-glycerol 3-phosphate + CoA. It carries out the reaction 1-acyl-sn-glycero-3-phospho-(1'-sn-glycerol) + an acyl-CoA = a 1,2-diacyl-sn-glycero-3-phospho-(1'-sn-glycerol) + CoA. Its pathway is phospholipid metabolism; CDP-diacylglycerol biosynthesis; CDP-diacylglycerol from sn-glycerol 3-phosphate: step 1/3. Functionally, mitochondrial membrane protein that catalyzes the essential first step of biosynthesis of glycerolipids such as triglycerides, phosphatidic acids and lysophosphatidic acids. Esterifies acyl-group from acyl-coenzyme A (acyl-CoA) to the sn-1 position of glycerol-3-phosphate, to produce lysophosphatidic acid. Has a narrow hydrophobic binding cleft that selects for a linear acyl chain. Catalytic activity is higher for substrates with a 16-carbon acyl chain. This Bos taurus (Bovine) protein is Glycerol-3-phosphate acyltransferase 1, mitochondrial.